Here is a 380-residue protein sequence, read N- to C-terminus: Erythronate-4-phosphate dehydrogenase (380 aa).

Substrate-binding residues include Ser45 and Thr66. Residues 126 to 127, Asp146, Thr175, 206 to 208, and Asp232 contribute to the NAD(+) site; these read QV and ASR. Arg208 is an active-site residue. The active site involves Glu237. His254 (proton donor) is an active-site residue. Gly257 lines the NAD(+) pocket. Tyr258 is a binding site for substrate.

The protein belongs to the D-isomer specific 2-hydroxyacid dehydrogenase family. PdxB subfamily. In terms of assembly, homodimer.

It localises to the cytoplasm. It carries out the reaction 4-phospho-D-erythronate + NAD(+) = (R)-3-hydroxy-2-oxo-4-phosphooxybutanoate + NADH + H(+). It participates in cofactor biosynthesis; pyridoxine 5'-phosphate biosynthesis; pyridoxine 5'-phosphate from D-erythrose 4-phosphate: step 2/5. Functionally, catalyzes the oxidation of erythronate-4-phosphate to 3-hydroxy-2-oxo-4-phosphonooxybutanoate. The chain is Erythronate-4-phosphate dehydrogenase from Pseudomonas aeruginosa (strain UCBPP-PA14).